The following is a 299-amino-acid chain: Oxygen-dependent coproporphyrinogen-III oxidase (299 aa).

S92 contacts substrate. Mn(2+)-binding residues include H96 and H106. H106 (proton donor) is an active-site residue. N108 to R110 is a binding site for substrate. Positions 145 and 175 each coordinate Mn(2+). The tract at residues Y240–E275 is important for dimerization. G258–R260 serves as a coordination point for substrate.

The protein belongs to the aerobic coproporphyrinogen-III oxidase family. In terms of assembly, homodimer. Requires Mn(2+) as cofactor.

It is found in the cytoplasm. The catalysed reaction is coproporphyrinogen III + O2 + 2 H(+) = protoporphyrinogen IX + 2 CO2 + 2 H2O. The protein operates within porphyrin-containing compound metabolism; protoporphyrin-IX biosynthesis; protoporphyrinogen-IX from coproporphyrinogen-III (O2 route): step 1/1. Its function is as follows. Involved in the heme biosynthesis. Catalyzes the aerobic oxidative decarboxylation of propionate groups of rings A and B of coproporphyrinogen-III to yield the vinyl groups in protoporphyrinogen-IX. The sequence is that of Oxygen-dependent coproporphyrinogen-III oxidase from Escherichia coli O127:H6 (strain E2348/69 / EPEC).